A 477-amino-acid polypeptide reads, in one-letter code: Calcium/calmodulin-dependent protein kinase type 1G (477 aa).

The region spanning 23–277 is the Protein kinase domain; sequence FIFMEVLGSG…CEKALRHPWI (255 aa). ATP contacts are provided by residues 29-37 and K52; that span reads LGSGAFSEV. Catalysis depends on D143, which acts as the Proton acceptor. Positions 277 to 317 are autoinhibitory domain; it reads IDGNTALHRDIYPSVSLQIQKNFAKSKWRQAFNAAAVVHHM. The segment at 297 to 318 is calmodulin-binding; it reads KNFAKSKWRQAFNAAAVVHHMR. The segment at 326–388 is disordered; it reads SPSVRQEVEN…SRPSAPSGGR (63 aa). Over residues 376-388 the composition is skewed to low complexity; the sequence is SHSSRPSAPSGGR.

Belongs to the protein kinase superfamily. CAMK Ser/Thr protein kinase family. CaMK subfamily. In terms of processing, may be prenylated on Cys-474. In terms of tissue distribution, highly expressed in brain, in neuronal cell bodies of the central nucleus of amygdala and ventromedial hypothalamic nucleus. Also detected in heart, testis, and kidney.

The protein localises to the cytoplasm. It is found in the golgi apparatus membrane. The protein resides in the cell membrane. It catalyses the reaction L-seryl-[protein] + ATP = O-phospho-L-seryl-[protein] + ADP + H(+). The enzyme catalyses L-threonyl-[protein] + ATP = O-phospho-L-threonyl-[protein] + ADP + H(+). Activated by Ca(2+)/calmodulin. Binding of calmodulin is thought to result in a conformational change and leads to activation through phosphorylation by CAMKK1. Functionally, calcium/calmodulin-dependent protein kinase belonging to a proposed calcium-triggered signaling cascade. In vitro phosphorylates transcription factor CREB1. The chain is Calcium/calmodulin-dependent protein kinase type 1G (Camk1g) from Mus musculus (Mouse).